A 234-amino-acid chain; its full sequence is Probable Ufm1-specific protease 1 (234 aa).

Residues C70, D194, and H196 contribute to the active site.

The protein belongs to the peptidase C78 family.

Thiol protease which recognizes and hydrolyzes the peptide bond at the C-terminal Gly of UFM1, a ubiquitin-like modifier protein bound to a number of target proteins. The polypeptide is Probable Ufm1-specific protease 1 (Drosophila melanogaster (Fruit fly)).